The primary structure comprises 147 residues: Ribonuclease H (147 aa).

One can recognise an RNase H type-1 domain in the interval Met-1–Lys-142. Positions 9, 47, 69, and 134 each coordinate Mg(2+).

The protein belongs to the RNase H family. In terms of assembly, monomer. The cofactor is Mg(2+).

Its subcellular location is the cytoplasm. It carries out the reaction Endonucleolytic cleavage to 5'-phosphomonoester.. Functionally, endonuclease that specifically degrades the RNA of RNA-DNA hybrids. In Acetivibrio thermocellus (strain ATCC 27405 / DSM 1237 / JCM 9322 / NBRC 103400 / NCIMB 10682 / NRRL B-4536 / VPI 7372) (Clostridium thermocellum), this protein is Ribonuclease H.